The sequence spans 373 residues: Flagellar P-ring protein 1 (373 aa).

The signal sequence occupies residues 1-24 (MRGISRLYWSLVLICFAFAPIVEA).

Belongs to the FlgI family. The basal body constitutes a major portion of the flagellar organelle and consists of four rings (L,P,S, and M) mounted on a central rod.

It localises to the periplasm. Its subcellular location is the bacterial flagellum basal body. In terms of biological role, assembles around the rod to form the L-ring and probably protects the motor/basal body from shearing forces during rotation. This chain is Flagellar P-ring protein 1, found in Hahella chejuensis (strain KCTC 2396).